A 181-amino-acid chain; its full sequence is Ninjurin-B (181 aa).

A compositionally biased stretch (basic and acidic residues) spans 1-10; that stretch reads MDSGEVKISL. A disordered region spans residues 1 to 72; the sequence is MDSGEVKISL…SNKKCSSDLS (72 aa). Topologically, residues 1-115 are extracellular; sequence MDSGEVKISL…YNDKASTYIY (115 aa). Polar residues predominate over residues 12–26; that stretch reads DSPSSGESFASTTSG. Positions 33–49 are enriched in basic and acidic residues; sequence RDLDIQVHESHIKDDQF. Positions 80-91 are helix alpha1; sequence NKNVAEGLMDIA. A helix alpha2 region spans residues 94–110; sequence SANANQLRFLITYNDKA. The helical transmembrane segment at 116–136 threads the bilayer; that stretch reads SMIMVILSLVLQLLVGIMLIF. The Cytoplasmic portion of the chain corresponds to 137 to 153; the sequence is KRRLKRFRNRSYERTND. The chain crosses the membrane as a helical span at residues 154–174; the sequence is LLVMGVFMITVINILLAAFTT. Over 175–181 the chain is Extracellular; it reads TDGGGSH.

The protein belongs to the ninjurin family.

The protein localises to the membrane. Functionally, effector of non-apoptotic necrotic cell death that mediates plasma membrane rupture (cytolysis): oligomerizes in response to death stimuli and promotes plasma membrane rupture by introducing hydrophilic faces of 2 alpha helices into the hydrophobic membrane, leading to release intracellular molecules that propagate the inflammatory response. Also acts as a homophilic transmembrane adhesion molecule that promotes cell adhesion by mediating homophilic interactions via its extracellular region. In Drosophila melanogaster (Fruit fly), this protein is Ninjurin-B.